Here is a 399-residue protein sequence, read N- to C-terminus: Yellow-related salivary protein M10 (399 aa).

The first 18 residues, 1-18 (MKFILSVLALASFQHVFC), serve as a signal peptide directing secretion. N-linked (GlcNAc...) asparagine glycans are attached at residues Asn29 and Asn83.

This sequence belongs to the major royal jelly protein family. As to expression, salivary gland (at protein level).

Its subcellular location is the secreted. In terms of biological role, probably modulates blood feeding of sand flies on vertebrate species by binding and sequestering different mediators involved in the host response. Functions as a chemoattractant for host neutrophils; likely acts through a G-protein-coupled receptor and effect is dependent on calcium influx and phosphatidylinositol 3-kinases (PI3K) activity. (Microbial infection) Probably enhances infection caused by Leishmania species in the host through augmentation of host neutrophil recruitment into the skin. In Phlebotomus duboscqi (Sandfly), this protein is Yellow-related salivary protein M10.